Here is a 340-residue protein sequence, read N- to C-terminus: Uroporphyrinogen decarboxylase (340 aa).

Residues 21-25 (RQAGR), aspartate 71, tyrosine 148, serine 203, and histidine 316 contribute to the substrate site.

The protein belongs to the uroporphyrinogen decarboxylase family. In terms of assembly, homodimer.

It is found in the cytoplasm. The enzyme catalyses uroporphyrinogen III + 4 H(+) = coproporphyrinogen III + 4 CO2. The protein operates within porphyrin-containing compound metabolism; protoporphyrin-IX biosynthesis; coproporphyrinogen-III from 5-aminolevulinate: step 4/4. Functionally, catalyzes the decarboxylation of four acetate groups of uroporphyrinogen-III to yield coproporphyrinogen-III. This chain is Uroporphyrinogen decarboxylase, found in Campylobacter jejuni subsp. jejuni serotype O:23/36 (strain 81-176).